The chain runs to 434 residues: Histidinol dehydrogenase (434 aa).

Residues tyrosine 130, glutamine 188, and asparagine 211 each contribute to the NAD(+) site. Residues serine 237, glutamine 259, and histidine 262 each coordinate substrate. Zn(2+)-binding residues include glutamine 259 and histidine 262. Catalysis depends on proton acceptor residues glutamate 326 and histidine 327. Substrate contacts are provided by histidine 327, aspartate 360, glutamate 414, and histidine 419. A Zn(2+)-binding site is contributed by aspartate 360. Histidine 419 serves as a coordination point for Zn(2+).

The protein belongs to the histidinol dehydrogenase family. In terms of assembly, homodimer. It depends on Zn(2+) as a cofactor.

The enzyme catalyses L-histidinol + 2 NAD(+) + H2O = L-histidine + 2 NADH + 3 H(+). It functions in the pathway amino-acid biosynthesis; L-histidine biosynthesis; L-histidine from 5-phospho-alpha-D-ribose 1-diphosphate: step 9/9. Catalyzes the sequential NAD-dependent oxidations of L-histidinol to L-histidinaldehyde and then to L-histidine. This is Histidinol dehydrogenase from Salmonella paratyphi A (strain ATCC 9150 / SARB42).